We begin with the raw amino-acid sequence, 138 residues long: Putative membrane protein ORF6 (138 aa).

2 consecutive transmembrane segments (helical) span residues 4–20 (LTII…HAVL) and 37–53 (VVVL…LMTI).

Its subcellular location is the membrane. The protein is Putative membrane protein ORF6 (ORF6) of Ictalurid herpesvirus 1 (strain Auburn) (IcHV-1).